Consider the following 365-residue polypeptide: 3-dehydroquinate synthase (365 aa).

NAD(+) is bound by residues aspartate 69–lysine 74, glycine 103–aspartate 107, threonine 127–threonine 128, lysine 140, and lysine 149. Residues glutamate 182, histidine 245, and histidine 262 each coordinate Zn(2+).

It belongs to the sugar phosphate cyclases superfamily. Dehydroquinate synthase family. It depends on NAD(+) as a cofactor. Co(2+) is required as a cofactor. The cofactor is Zn(2+).

It is found in the cytoplasm. It carries out the reaction 7-phospho-2-dehydro-3-deoxy-D-arabino-heptonate = 3-dehydroquinate + phosphate. It functions in the pathway metabolic intermediate biosynthesis; chorismate biosynthesis; chorismate from D-erythrose 4-phosphate and phosphoenolpyruvate: step 2/7. Its function is as follows. Catalyzes the conversion of 3-deoxy-D-arabino-heptulosonate 7-phosphate (DAHP) to dehydroquinate (DHQ). The protein is 3-dehydroquinate synthase of Pseudomonas putida (strain ATCC 47054 / DSM 6125 / CFBP 8728 / NCIMB 11950 / KT2440).